The primary structure comprises 469 residues: uncharacterized protein (469 aa).

A run of 3 helical transmembrane segments spans residues Asp42–Ile62, Ile179–Ser199, and Asn249–Val269.

It localises to the cell membrane. This is an uncharacterized protein from Methanocaldococcus jannaschii (strain ATCC 43067 / DSM 2661 / JAL-1 / JCM 10045 / NBRC 100440) (Methanococcus jannaschii).